The following is a 184-amino-acid chain: Putative manganese efflux pump MntP (184 aa).

The next 6 membrane-spanning stretches (helical) occupy residues 5–25 (LISIIIIAIALAMDAFSVSLT), 38–58 (ILYYGLFFGFFQFIMPVIGYI), 67–87 (VSTVAPWIAFFLLLAIGLNMI), 107–127 (LTLLAVATSIDAFAVGITFAL), 133–153 (LLPCTIIGIVAFIFSISGIFI), and 164–184 (KFEILGGAVLILIGIKILLGY).

It belongs to the MntP (TC 9.B.29) family.

It localises to the cell membrane. Functionally, probably functions as a manganese efflux pump. This Methanobrevibacter smithii (strain ATCC 35061 / DSM 861 / OCM 144 / PS) protein is Putative manganese efflux pump MntP.